An 88-amino-acid chain; its full sequence is Small ribosomal subunit protein bS20 (88 aa).

The disordered stretch occupies residues 1 to 25 (MANSAQARKRARQAVAQNAHNSSLR).

The protein belongs to the bacterial ribosomal protein bS20 family.

In terms of biological role, binds directly to 16S ribosomal RNA. In Cupriavidus pinatubonensis (strain JMP 134 / LMG 1197) (Cupriavidus necator (strain JMP 134)), this protein is Small ribosomal subunit protein bS20.